We begin with the raw amino-acid sequence, 283 residues long: Pantothenate synthetase 1 (283 aa).

An ATP-binding site is contributed by 30–37 (MGYLHDGH). His-37 serves as the catalytic Proton donor. (R)-pantoate is bound at residue Gln-61. Gln-61 lines the beta-alanine pocket. 147–150 (GQKD) contributes to the ATP binding site. Gln-153 serves as a coordination point for (R)-pantoate. Residues Val-176 and 184–187 (MSSR) each bind ATP.

The protein belongs to the pantothenate synthetase family. In terms of assembly, homodimer.

It localises to the cytoplasm. It catalyses the reaction (R)-pantoate + beta-alanine + ATP = (R)-pantothenate + AMP + diphosphate + H(+). The protein operates within cofactor biosynthesis; (R)-pantothenate biosynthesis; (R)-pantothenate from (R)-pantoate and beta-alanine: step 1/1. Its function is as follows. Catalyzes the condensation of pantoate with beta-alanine in an ATP-dependent reaction via a pantoyl-adenylate intermediate. This Bradyrhizobium diazoefficiens (strain JCM 10833 / BCRC 13528 / IAM 13628 / NBRC 14792 / USDA 110) protein is Pantothenate synthetase 1.